The following is a 459-amino-acid chain: Serine--tRNA ligase (459 aa).

Thr-254 to Glu-256 lines the L-serine pocket. ATP contacts are provided by residues Arg-285–Glu-287 and Val-301. Residue Glu-308 coordinates L-serine. Residue Glu-372 to Ser-375 coordinates ATP. Thr-408 contributes to the L-serine binding site.

This sequence belongs to the class-II aminoacyl-tRNA synthetase family. Type-1 seryl-tRNA synthetase subfamily. Homodimer. The tRNA molecule binds across the dimer.

Its subcellular location is the cytoplasm. The enzyme catalyses tRNA(Ser) + L-serine + ATP = L-seryl-tRNA(Ser) + AMP + diphosphate + H(+). It catalyses the reaction tRNA(Sec) + L-serine + ATP = L-seryl-tRNA(Sec) + AMP + diphosphate + H(+). Its pathway is aminoacyl-tRNA biosynthesis; selenocysteinyl-tRNA(Sec) biosynthesis; L-seryl-tRNA(Sec) from L-serine and tRNA(Sec): step 1/1. Functionally, catalyzes the attachment of serine to tRNA(Ser). Is also able to aminoacylate tRNA(Sec) with serine, to form the misacylated tRNA L-seryl-tRNA(Sec), which will be further converted into selenocysteinyl-tRNA(Sec). In Desulfurococcus amylolyticus (strain DSM 18924 / JCM 16383 / VKM B-2413 / 1221n) (Desulfurococcus kamchatkensis), this protein is Serine--tRNA ligase.